The primary structure comprises 1082 residues: MRVRVDVCWTQHIFLFFVFGLSFMSFALSLDGDDYSKTGNPKALVSVTNLIYTRLQNLKTVLKADVDRDLGYCIKNLKGDWNEAFNFDKNLDFLSNCVKKNDGDLTLRLCSAAEIKFYFSSFVRRDEATTVHVKPNINCNLAKWVSGCEPGWSCNADDEKRFDLNNGKILPSRTRKCQPCCEGFFCPQGLACMIPCPLGAYCPLAKLNKTTGFCEPYNYQIPPGKLNHTCGSADSWVDAESSGDMFCSPGSYCPTTIRKVTCSSGHYCRQGSTSQKPCFKLATCNPNTANQNIHAYGAILIASLSLLMIMVYNCSDQVLATREKRQAKSREAAARHAKETTQARERWKTAKGVAKNQKMGLSAQLSQTFSRMKSARKDATPVKASGKSKDKKKEPSNLTKMMKSMEENPSNNEGFNVGTGSKPGKKPQAPKGKQLHTQSQIFKYAYGQIEKEKAMEQNNKNLTFSGVISMATDTEMRTRPVIEVAFKDLTLTLKGKHKHILRSVTGKIMPGRVSAVMGPSGAGKTTFLSALAGKATGCTRTGLILINGRNDSINSYKKITGFVPQDDVVHGNLTVEENLRFSARCRLSAYMSKADKVLIIERVIESLGLQHVRDSLVGTIEKRGISGGQRKRVNVGVEMVMEPSLLILDEPTTGLDSASSQLLLRALRREALEGVNICMVVHQPSYTMYKMFDDMIILAKGGLTVYHGSVKKIEEYFADIGITVPDRVNPPDHYIDILEGIVKPDGDITIEQLPVRWMLHNGYPVPHDMLKFCDGLPSSSTGSAQEDSTHNSFSNDLWQDVKTNVEITKDQLQHNYSNSHDNSNRVTPTVGRQYRYFVGRVGKQRLREARLQALDFLILLVAGACLGTLAKVNDETIDTLGYTYTIIAVSLLCKISALRSFSVDKLQYWRESAAGISSLAHFMAKDTMDHLNTIMKPLVYLSMFYFFNNPRSSFEDNYIVLVCLVYCVTGMAYIFAILYSPSAAQLLSVLVPVVMTLIANQDKESMVLKYLGSFCYPKWTLEAFVLSNAQRYSGVWVVTRCSSLSQNGYDLSDWILCLIVLVLMGLICRFIAYFCMVTFQKK.

2 consecutive transmembrane segments (helical) span residues 12–32 (HIFLFFVFGLSFMSFALSLDG) and 292–312 (NIHAYGAILIASLSLLMIMVY). Over residues 329–348 (SREAAARHAKETTQARERWK) the composition is skewed to basic and acidic residues. A disordered region spans residues 329–437 (SREAAARHAK…QAPKGKQLHT (109 aa)). Residues 484 to 726 (VAFKDLTLTL…FADIGITVPD (243 aa)) enclose the ABC transporter domain. Residue 518-525 (GPSGAGKT) coordinates ATP. Residues 832-1029 (RQYRYFVGRV…TLEAFVLSNA (198 aa)) form the ABC transmembrane type-2 domain. 5 consecutive transmembrane segments (helical) span residues 853 to 873 (ALDFLILLVAGACLGTLAKVN), 877 to 897 (IDTLGYTYTIIAVSLLCKISA), 958 to 978 (YIVLVCLVYCVTGMAYIFAIL), 979 to 999 (YSPSAAQLLSVLVPVVMTLIA), and 1054 to 1074 (WILCLIVLVLMGLICRFIAYF).

It belongs to the ABC transporter superfamily. ABCG family. Eye pigment precursor importer (TC 3.A.1.204) subfamily.

The protein resides in the membrane. The chain is Putative white-brown complex homolog protein 30 (WBC30) from Arabidopsis thaliana (Mouse-ear cress).